Reading from the N-terminus, the 449-residue chain is Adenylosuccinate lyase (449 aa).

N(6)-(1,2-dicarboxyethyl)-AMP is bound by residues 9 to 10, 75 to 77, and 102 to 103; these read RY, KHD, and TS. The active-site Proton donor/acceptor is His-150. Gln-224 is a N(6)-(1,2-dicarboxyethyl)-AMP binding site. Ser-275 functions as the Proton donor/acceptor in the catalytic mechanism. Residues Ser-276, 281 to 283, and 320 to 324 contribute to the N(6)-(1,2-dicarboxyethyl)-AMP site; these read KMN and SSERI.

This sequence belongs to the lyase 1 family. Adenylosuccinate lyase subfamily. Homotetramer. Residues from neighboring subunits contribute catalytic and substrate-binding residues to each active site.

It catalyses the reaction N(6)-(1,2-dicarboxyethyl)-AMP = fumarate + AMP. It carries out the reaction (2S)-2-[5-amino-1-(5-phospho-beta-D-ribosyl)imidazole-4-carboxamido]succinate = 5-amino-1-(5-phospho-beta-D-ribosyl)imidazole-4-carboxamide + fumarate. The protein operates within purine metabolism; AMP biosynthesis via de novo pathway; AMP from IMP: step 2/2. It participates in purine metabolism; IMP biosynthesis via de novo pathway; 5-amino-1-(5-phospho-D-ribosyl)imidazole-4-carboxamide from 5-amino-1-(5-phospho-D-ribosyl)imidazole-4-carboxylate: step 2/2. In terms of biological role, catalyzes two reactions in de novo purine nucleotide biosynthesis. Catalyzes the breakdown of 5-aminoimidazole- (N-succinylocarboxamide) ribotide (SAICAR or 2-[5-amino-1-(5-phospho-beta-D-ribosyl)imidazole-4-carboxamido]succinate) to 5-aminoimidazole-4-carboxamide ribotide (AICAR or 5-amino-1-(5-phospho-beta-D-ribosyl)imidazole-4-carboxamide) and fumarate, and of adenylosuccinate (ADS or N(6)-(1,2-dicarboxyethyl)-AMP) to adenosine monophosphate (AMP) and fumarate. The polypeptide is Adenylosuccinate lyase (purB) (Methanothermobacter thermautotrophicus (strain ATCC 29096 / DSM 1053 / JCM 10044 / NBRC 100330 / Delta H) (Methanobacterium thermoautotrophicum)).